A 567-amino-acid polypeptide reads, in one-letter code: Urease subunit alpha (567 aa).

In terms of domain architecture, Urease spans 129–567 (GGVDTHIHWI…LPMAQRYFLF (439 aa)). Ni(2+) contacts are provided by His134, His136, and Lys217. The residue at position 217 (Lys217) is an N6-carboxylysine. His219 contacts substrate. Residues His246 and His272 each contribute to the Ni(2+) site. The active-site Proton donor is the His320. Position 360 (Asp360) interacts with Ni(2+).

Belongs to the metallo-dependent hydrolases superfamily. Urease alpha subunit family. As to quaternary structure, heterotrimer of UreA (gamma), UreB (beta) and UreC (alpha) subunits. Three heterotrimers associate to form the active enzyme. Requires Ni cation as cofactor. In terms of processing, carboxylation allows a single lysine to coordinate two nickel ions.

The protein resides in the cytoplasm. The enzyme catalyses urea + 2 H2O + H(+) = hydrogencarbonate + 2 NH4(+). Its pathway is nitrogen metabolism; urea degradation; CO(2) and NH(3) from urea (urease route): step 1/1. This chain is Urease subunit alpha, found in Escherichia coli O157:H7.